The chain runs to 135 residues: Race-specific elicitor A4 (135 aa).

The first 18 residues, Met-1–Ala-18, serve as a signal peptide directing secretion. The propeptide occupies Gln-19–Lys-29. A disordered region spans residues Gln-19–Pro-39. The Chitin-binding type-2 domain occupies Asp-47–Val-111. Residues Cys-86 and Cys-101 are joined by a disulfide bond. Residues Lys-112 to Tyr-135 are disordered.

Its function is as follows. This necrosis-inducing peptide induces a hypersensitive response on Cf-4 tomato genotypes. Race-specific elicitors are compounds which only induce defense responses in genotypes of host plants which are resistant to the pathogenic race that produces the elicitor, but not in susceptible genotypes. The sequence is that of Race-specific elicitor A4 (AVR4) from Passalora fulva (Tomato leaf mold).